The following is a 43-amino-acid chain: MRPSLYDQIVAILDRHDSCCGFERDDAAEELHALVIELYGPPF.

In Mycobacterium phage L5 (Mycobacteriophage L5), this protein is Gene 67 protein (67).